The primary structure comprises 240 residues: Ubiquinone biosynthesis O-methyltransferase (240 aa).

Residues arginine 44, glycine 64, aspartate 85, and methionine 129 each coordinate S-adenosyl-L-methionine.

This sequence belongs to the methyltransferase superfamily. UbiG/COQ3 family.

It catalyses the reaction a 3-demethylubiquinol + S-adenosyl-L-methionine = a ubiquinol + S-adenosyl-L-homocysteine + H(+). It carries out the reaction a 3-(all-trans-polyprenyl)benzene-1,2-diol + S-adenosyl-L-methionine = a 2-methoxy-6-(all-trans-polyprenyl)phenol + S-adenosyl-L-homocysteine + H(+). Its pathway is cofactor biosynthesis; ubiquinone biosynthesis. Its function is as follows. O-methyltransferase that catalyzes the 2 O-methylation steps in the ubiquinone biosynthetic pathway. This chain is Ubiquinone biosynthesis O-methyltransferase, found in Shigella flexneri serotype 5b (strain 8401).